The sequence spans 391 residues: 3-demethoxyubiquinol 3-hydroxylase (391 aa).

This sequence belongs to the UbiH/COQ6 family. Component of the Ubi complex metabolon, which regroups five ubiquinone biosynthesis proteins (UbiE, UbiF, UbiG, UbiH and UbiI) and two accessory factors (UbiK and the lipid-binding protein UbiJ). FAD serves as cofactor.

The protein localises to the cytoplasm. The catalysed reaction is a 5-methoxy-2-methyl-3-(all-trans-polyprenyl)benzene-1,4-diol + AH2 + O2 = a 3-demethylubiquinol + A + H2O. It participates in cofactor biosynthesis; ubiquinone biosynthesis. Catalyzes the hydroxylation of 2-octaprenyl-3-methyl-6-methoxy-1,4-benzoquinol during ubiquinone biosynthesis. This Escherichia coli (strain K12) protein is 3-demethoxyubiquinol 3-hydroxylase (ubiF).